The primary structure comprises 227 residues: Isoprenyl transferase (227 aa).

Residue aspartate 13 is part of the active site. Aspartate 13 is a binding site for Mg(2+). Substrate is bound by residues 14 to 17 (GNGR), tryptophan 18, arginine 26, histidine 30, and 58 to 60 (STE). Asparagine 61 functions as the Proton acceptor in the catalytic mechanism. Residues tryptophan 62, arginine 64, arginine 175, and 181-183 (RLS) each bind substrate. Mg(2+) is bound at residue glutamate 194.

Belongs to the UPP synthase family. In terms of assembly, homodimer. The cofactor is Mg(2+).

Functionally, catalyzes the condensation of isopentenyl diphosphate (IPP) with allylic pyrophosphates generating different type of terpenoids. The protein is Isoprenyl transferase of Treponema denticola (strain ATCC 35405 / DSM 14222 / CIP 103919 / JCM 8153 / KCTC 15104).